Consider the following 90-residue polypeptide: MPNKPIRLPPLKQLRVRQANKAEENPCIAVMSSVLACWASAGYNSAGCATVENALRACMDAPKPAPKPNNTINYHLSRFQERLTQGKSKK.

Cys-27 and Cys-58 are joined by a disulfide.

This sequence belongs to the mitochondrion-specific ribosomal protein mS37 family. As to quaternary structure, component of the mitochondrial small ribosomal subunit (mt-SSU). Mature N.crassa 74S mitochondrial ribosomes consist of a small (37S) and a large (54S) subunit. The 37S small subunit contains a 16S ribosomal RNA (16S mt-rRNA) and 32 different proteins. The 54S large subunit contains a 23S rRNA (23S mt-rRNA) and 42 different proteins.

It localises to the mitochondrion. Component of the mitochondrial ribosome (mitoribosome), a dedicated translation machinery responsible for the synthesis of mitochondrial genome-encoded proteins, including at least some of the essential transmembrane subunits of the mitochondrial respiratory chain. The mitoribosomes are attached to the mitochondrial inner membrane and translation products are cotranslationally integrated into the membrane. This is Small ribosomal subunit protein mS37 (mrp10) from Neurospora crassa (strain ATCC 24698 / 74-OR23-1A / CBS 708.71 / DSM 1257 / FGSC 987).